The following is a 391-amino-acid chain: Zinc finger protein ubi-d4 (391 aa).

Ala-2 is subject to N-acetylalanine. Residues Lys-10, Lys-99, Lys-107, and Lys-108 each participate in a glycyl lysine isopeptide (Lys-Gly) (interchain with G-Cter in SUMO2) cross-link. Disordered stretches follow at residues 79-147 and 165-199; these read WRKK…GEFP and DDLD…KLDA. Basic and acidic residues-rich tracts occupy residues 100 to 110 and 126 to 140; these read PDTDQTLKKEG and DPLE…RVDD. Phosphoserine is present on Ser-142. The span at 165–174 shows a compositional bias: acidic residues; sequence DDLDDEDYEE. Position 172 is a phosphotyrosine (Tyr-172). Thr-176 carries the phosphothreonine modification. Residues Lys-178 and Lys-196 each participate in a glycyl lysine isopeptide (Lys-Gly) (interchain with G-Cter in SUMO2) cross-link. A Phosphoserine modification is found at Ser-200. The C2H2-type zinc-finger motif lies at 209 to 232; that stretch reads YACDICGKRYKNRPGLSYHYAHSH. The disordered stretch occupies residues 233–266; sequence LAEEEGEDKEDSRPPTPVSQRSEEQKSKKGPDGL. Ser-244 carries the post-translational modification Phosphoserine. The segment covering 253-263 has biased composition (basic and acidic residues); sequence RSEEQKSKKGP. 2 consecutive PHD-type zinc fingers follow at residues 270 to 330 and 327 to 377; these read NNYC…CKCC and CKCC…CLDL. Ser-280 bears the Phosphoserine mark. Residue Lys-281 forms a Glycyl lysine isopeptide (Lys-Gly) (interchain with G-Cter in SUMO2) linkage.

This sequence belongs to the requiem/DPF family. As to quaternary structure, interacts with the nucleosomes, in particular nucleosomes bearing histone H3 crotonylated at 'Lys-14' (H3K14cr) for which DPF2 has high affinity. Also interacts (via PHD-type zinc finger domains) with histone H3 butyrylated at 'Lys-14' (H3K14bu), histone H3 propionylated at 'Lys-14' (H3K14pr), and histone H3 acetylated at 'Lys-14' (H3K14ac). Interacts with histone H3 acetylated at 'Lys-9' (H3K9ac), histone H3 di-methylated at 'Lys-9' (H3K9me2), and histone H3 tri-methylated at 'Lys-9' (H3K9me3). Interacts with histone H4 acetylated at 'Lys-12' (H4K12ac). Interacts with histone H4 acetylated at 'Lys-16' (H4K16ac). Interacts with SWI/SNF complex components. Interacts with SMARCA2, SMARCA4, SMARCB1 and SMARCD1. Interacts with SMARCC1, SMARCC2 and ACTL6A. Interacts with RUNX1. In embryo, highest levels are seen in brain, eyes, thymus and olfactory epithelium in nose, whereas several other tissues, including the musculoskeletal system, show moderate expression. In adult, higher expression in testis, medium in thymus and spleen, lower in certain parts of the brain as the hippocampus. No expression in adult heart, lung, liver, duodenum and kidney.

It localises to the nucleus. Its subcellular location is the cytoplasm. Its function is as follows. Plays an active role in transcriptional regulation by binding modified histones H3 and H4. Is a negative regulator of myeloid differentiation of hematopoietic progenitor cells. Might also have a role in the development and maturation of lymphoid cells. Involved in the regulation of non-canonical NF-kappa-B pathway. This chain is Zinc finger protein ubi-d4 (Dpf2), found in Mus musculus (Mouse).